The following is a 276-amino-acid chain: O-methyltransferase cnsE (276 aa).

S-adenosyl-L-methionine-binding positions include Q110, 133-134 (DA), and H155.

This sequence belongs to the methyltransferase superfamily. Requires S-adenosyl-L-methionine as cofactor.

Its pathway is alkaloid biosynthesis. In terms of biological role, O-methyltransferase; part of the gene cluster that mediates the biosynthesis of communesins, a prominent class of indole alkaloids with great potential as pharmaceuticals. Communesins are biosynthesized by the coupling of tryptamine and aurantioclavine, two building blocks derived from L-tryptophan. The L-tryptophan decarboxylase cnsB converts L-tryptophan to tryptamine, whereas the tryptophan dimethylallyltransferase cnsF converts L-tryptophan to 4-dimethylallyl tryptophan which is further transformed to aurantioclavine by the aurantioclavine synthase cnsA, probably aided by the catalase cnsD. The cytochrome P450 monooxygenase cnsC catalyzes the heterodimeric coupling between the two different indole moieties, tryptamine and aurantioclavine, to construct vicinal quaternary stereocenters and yield the heptacyclic communesin scaffold. The O-methyltransferase cnsE then methylates the communesin scaffold to produce communesin K, the simplest characterized communesin that contains the heptacyclic core. The dioxygenase cnsJ converts communesin K into communesin I. Acylation to introduce the hexadienyl group at position N16 of communesin I by the acyltransferase cnsK leads to the production of communesin B. The hexadienyl group is produced by the highly reducing polyketide synthase cnsI, before being hydrolytically removed from cnsI by the serine hydrolase cnsH, converted into hexadienyl-CoA by the CoA ligase cnsG, and then transferred to communesin I by cnsK. Surprisingly, cnsK may also be a promiscuous acyltransferase that can tolerate a range of acyl groups, including acetyl-, propionyl-, and butyryl-CoA, which lead to communesins A, G and H respectively. The roles of the alpha-ketoglutarate-dependent dioxygenases cnsM and cnsP have still to be determined. The chain is O-methyltransferase cnsE from Penicillium expansum (Blue mold rot fungus).